We begin with the raw amino-acid sequence, 1040 residues long: Multidrug resistance protein MdtB (1040 aa).

12 helical membrane passes run 16-36 (FIMR…AGII), 347-367 (LMMA…NIPA), 369-389 (IIPG…MVFL), 396-416 (LTLM…IVVI), 440-460 (IGFT…PLLF), 472-492 (FAIT…TLTP), 537-557 (WLTL…WVFI), 863-883 (LGST…VLGI), 888-908 (FIHP…ALLA), 911-931 (IAGS…IGIV), 968-988 (ILMT…STGV), and 998-1018 (IGMV…TPVI).

This sequence belongs to the resistance-nodulation-cell division (RND) (TC 2.A.6) family. MdtB subfamily. Part of a tripartite efflux system composed of MdtA, MdtB and MdtC. MdtB forms a heteromultimer with MdtC.

The protein resides in the cell inner membrane. The polypeptide is Multidrug resistance protein MdtB (Shigella boydii serotype 4 (strain Sb227)).